The sequence spans 338 residues: GTPase Obg (338 aa).

The region spanning 1–159 (MKFVDSASVF…FTLDLELKLM (159 aa)) is the Obg domain. The interval 123–145 (GGRGNQHFATSTHQAPRHAEPGQ) is disordered. In terms of domain architecture, OBG-type G spans 160 to 323 (ADVGLVGFPN…LKDALWRIIV (164 aa)). GTP contacts are provided by residues 166-173 (GFPNAGKS), 191-195 (FTTLV), 213-216 (DIPG), 280-283 (TKMD), and 304-306 (SAV). 2 residues coordinate Mg(2+): S173 and T193.

Belongs to the TRAFAC class OBG-HflX-like GTPase superfamily. OBG GTPase family. In terms of assembly, monomer. It depends on Mg(2+) as a cofactor.

Its subcellular location is the cytoplasm. Its function is as follows. An essential GTPase which binds GTP, GDP and possibly (p)ppGpp with moderate affinity, with high nucleotide exchange rates and a fairly low GTP hydrolysis rate. Plays a role in control of the cell cycle, stress response, ribosome biogenesis and in those bacteria that undergo differentiation, in morphogenesis control. This is GTPase Obg from Chlorobium chlorochromatii (strain CaD3).